Here is a 962-residue protein sequence, read N- to C-terminus: pH-response regulator protein palF/prr-3 (962 aa).

Disordered stretches follow at residues 1–43, 225–326, 568–675, and 689–962; these read MGPF…DSST, APPK…THPS, TDSN…PDEN, and RLLP…RYER. Residues 237–246 are compositionally biased toward basic residues; that stretch reads ISKRAKKKRP. 3 stretches are compositionally biased toward polar residues: residues 297-307, 314-326, and 581-596; these read GFSQAPRSVSH, SGDSAASLSTHPS, and PSLTHTPSVTGGSNYV. 2 stretches are compositionally biased toward low complexity: residues 696 to 722 and 738 to 747; these read PIAAASSSSFSAAVPSPSASSHVPDSS and PTPAATPATA. Residues 793-805 show a composition bias toward basic and acidic residues; the sequence is TEDKQELERRRLL. Over residues 830 to 839 the composition is skewed to low complexity; sequence AGPSGSRAGP. Residues 840–849 are compositionally biased toward pro residues; the sequence is SAPPPAPPVA. The segment covering 913–928 has biased composition (low complexity); sequence PSSPVLAPASAFFPAS. The span at 929–949 shows a compositional bias: polar residues; that stretch reads GSGNVHDSPREQGQQARSDSS.

This sequence belongs to the arrestin family. PalF/RIM8 subfamily.

Required for the proteolytic cleavage of the transcription factor pacc-1 in response to alkaline ambient pH. The protein is pH-response regulator protein palF/prr-3 (prr-3) of Neurospora crassa (strain ATCC 24698 / 74-OR23-1A / CBS 708.71 / DSM 1257 / FGSC 987).